We begin with the raw amino-acid sequence, 87 residues long: UPF0367 protein SynRCC307_0258 (87 aa).

Belongs to the UPF0367 family.

The protein is UPF0367 protein SynRCC307_0258 of Synechococcus sp. (strain RCC307).